A 401-amino-acid chain; its full sequence is uncharacterized protein (401 aa).

[4Fe-4S] cluster contacts are provided by Cys-7, Cys-13, Cys-16, and Cys-94. Residues Gln-230, Tyr-259, Glu-280, and Asp-328 each contribute to the S-adenosyl-L-methionine site. Cys-355 (nucleophile) is an active-site residue.

This sequence belongs to the class I-like SAM-binding methyltransferase superfamily. RNA M5U methyltransferase family.

This is an uncharacterized protein from Chlamydia caviae (strain ATCC VR-813 / DSM 19441 / 03DC25 / GPIC) (Chlamydophila caviae).